The sequence spans 161 residues: Cytochrome c-type biogenesis protein CcmE (161 aa).

Topologically, residues 1–13 (MSWLPKSPKARRR) are cytoplasmic. Residues 14–34 (LMLVAAIAPVLAVAAGLTLWG) traverse the membrane as a helical; Signal-anchor for type II membrane protein segment. The Periplasmic segment spans residues 35–161 (LSDSISFFYT…QRPEHQGDAL (127 aa)). 2 residues coordinate heme: His-128 and Tyr-132.

Belongs to the CcmE/CycJ family.

It localises to the cell inner membrane. In terms of biological role, heme chaperone required for the biogenesis of c-type cytochromes. Transiently binds heme delivered by CcmC and transfers the heme to apo-cytochromes in a process facilitated by CcmF and CcmH. The polypeptide is Cytochrome c-type biogenesis protein CcmE (Phenylobacterium zucineum (strain HLK1)).